A 120-amino-acid chain; its full sequence is MALKIRLTRGGAKKRPYYRIVVADARAPRDGRFIDKVGAYDPMKAKDDPARIVLDNEKIQSWLAKGAQPTDRVLRFLDQAGLAKRPARNNPQKAEPGEKAKERAAKRAEKAAAPAEDAAA.

The disordered stretch occupies residues 81–120 (GLAKRPARNNPQKAEPGEKAKERAAKRAEKAAAPAEDAAA). Basic and acidic residues predominate over residues 95–110 (EPGEKAKERAAKRAEK). The segment covering 111-120 (AAAPAEDAAA) has biased composition (low complexity).

It belongs to the bacterial ribosomal protein bS16 family.

The chain is Small ribosomal subunit protein bS16 from Methylobacterium radiotolerans (strain ATCC 27329 / DSM 1819 / JCM 2831 / NBRC 15690 / NCIMB 10815 / 0-1).